Here is a 1070-residue protein sequence, read N- to C-terminus: DNA double-strand break repair Rad50 ATPase (1070 aa).

ATP-binding positions include R12, 32–38 (NGSGKSS), and Q142. Coiled coils occupy residues 227–257 (LEEL…RLQE), 369–403 (ECRT…EKAG), and 449–478 (LREL…KEIR). The region spanning 508-607 (LENLEDFNEL…KLNRLKEAKK (100 aa)) is the Zinc-hook domain. Zn(2+) contacts are provided by C555 and C558. 2 coiled-coil regions span residues 570–614 (TAEE…QAYD) and 878–908 (LKRL…ADEL). An ATP-binding site is contributed by 969 to 974 (LLSGGE).

Belongs to the SMC family. RAD50 subfamily. As to quaternary structure, homodimer. Forms a heterotetramer composed of two Mre11 subunits and two Rad50 subunits. Zn(2+) is required as a cofactor.

Part of the Rad50/Mre11 complex, which is involved in the early steps of DNA double-strand break (DSB) repair. The complex may facilitate opening of the processed DNA ends to aid in the recruitment of HerA and NurA. Rad50 controls the balance between DNA end bridging and DNA resection via ATP-dependent structural rearrangements of the Rad50/Mre11 complex. The polypeptide is DNA double-strand break repair Rad50 ATPase (Methanosarcina mazei (strain ATCC BAA-159 / DSM 3647 / Goe1 / Go1 / JCM 11833 / OCM 88) (Methanosarcina frisia)).